Consider the following 1475-residue polypeptide: Alpha-glucan water dikinase, chloroplastic (1475 aa).

The transit peptide at M1–A85 directs the protein to the chloroplast. H1077 (tele-phosphohistidine intermediate) is an active-site residue.

The protein belongs to the PEP-utilizing enzyme family. In terms of assembly, homodimer. The cofactor is Mg(2+).

Its subcellular location is the plastid. The protein localises to the chloroplast. The enzyme catalyses [(1-&gt;4)-alpha-D-glucosyl](n) + n ATP + n H2O = [(1-&gt;4)-6-phospho-alpha-D-glucosyl](n) + n AMP + n phosphate + 2n H(+). Mediates the incorporation of phosphate into starch-like alpha-glucan, mostly at the C-6 position of glucose units. Acts as an overall regulator of starch mobilization. Required for starch degradation, suggesting that the phosphate content of starch regulates its degradability. The sequence is that of Alpha-glucan water dikinase, chloroplastic (R1) from Citrus reticulata (Tangerine).